We begin with the raw amino-acid sequence, 46 residues long: Lantibiotic streptin (46 aa).

The propeptide occupies 1-24; the sequence is MNNTIKDFDLDLKTNKKDTATPYV.

This sequence belongs to the type A lantibiotic family. Maturation of lantibiotics involves the enzymatic conversion of Thr, and Ser into dehydrated AA and the formation of thioether bonds with cysteine. This is followed by membrane translocation and cleavage of the modified precursor.

Lanthionine-containing peptide antibiotic (lantibiotic) active on certain Gram-positive bacteria. The bactericidal activity of lantibiotics is based on depolarization of energized bacterial cytoplasmic membranes, initiated by the formation of aqueous transmembrane pores. The protein is Lantibiotic streptin (srtA) of Streptococcus pyogenes serotype M1.